The following is a 189-amino-acid chain: Protein Rex (189 aa).

Residues 1–16 are compositionally biased toward basic residues; it reads MPKTRRRPRRSQRKRP. Residues 1–28 form a disordered region; that stretch reads MPKTRRRPRRSQRKRPPTPWPTSQGLDR. A Nuclear localization signal, and RNA-binding (RxRE) motif is present at residues 2–18; the sequence is PKTRRRPRRSQRKRPPT. The interval 56–70 is homomultimerization; sequence RPVYIVTPYWPPVQS. Residue serine 70 is modified to Phosphoserine; by host. A Nuclear export signal motif is present at residues 82-93; it reads LSAQLYSSLSLD. Positions 84–94 are enriched in low complexity; the sequence is AQLYSSLSLDS. The disordered stretch occupies residues 84 to 189; that stretch reads AQLYSSLSLD…PPSPGPSCPT (106 aa). The span at 111–125 shows a compositional bias: pro residues; that stretch reads RRPPIQPPTFHPPSS. Positions 123 to 131 are homomultimerization; the sequence is PSSRPCANT. Residues 127 to 164 are compositionally biased toward polar residues; it reads PCANTPPSETDTWNPPLGSTSQPCLFQTPASGPKTCTP. Position 174 is a phosphothreonine; by host (threonine 174). Serine 177 is modified (phosphoserine; by host). Residues 178-189 show a composition bias toward pro residues; the sequence is FPPPSPGPSCPT.

Belongs to the deltaretrovirus Rex protein family. In terms of assembly, homomultimer. Multimeric assembly is essential for activity and involves XPO1. Binds to human XPO1 and KPNB1. Interacts (via N-terminal nuclear localization signal) with human NPM1. Phosphorylated.

Its subcellular location is the host nucleus. It is found in the host nucleolus. The protein localises to the host cytoplasm. In terms of biological role, rex escorts unspliced gag-pro-pol and singly spliced env mRNAs out of the nucleus of infected cells. These mRNAs carry a recognition sequence called Rex responsive element (RxRE or XRE) located at the 3' region of the long terminal repeat (LTR). This function is essential since most HTLV proteins are translated from unspliced or partially spliced pre-mRNAs that cannot exit the nucleus by the pathway used by fully processed cellular mRNAs. Rex itself is translated from a fully spliced mRNA that probably readily exits the nucleus. Rex's nuclear localization signal (NLS) binds directly to KPNB1/importin beta-1 without previous binding to KPNA1/importin alpha-1. KPNB1 binds to the GDP bound form of RAN (Ran-GDP) and targets Rex to the nucleus. In the nucleus, the conversion from Ran-GDP to Ran-GTP dissociates Rex from KPNB1 and allows Rex's binding to the RRE in viral pre-mRNAs. Rex multimerizes on the RRE via cooperative assembly. This multimerization is critical for its full biological activity, since it may shield the viral RNA from being spliced or down-regulated, and probably exposes Rex's nuclear export signal (NES) to the surface. Rex can then form a complex with XPO1/CRM1, RANBP3 and Ran-GTP, leading to nuclear export of the complex. Conversion from Ran-GTP to Ran-GDP mediates dissociation of the Rex/RRE/XPO1/RANBP3/RAN complex, so that Rex can return to the nucleus for a subsequent round of export. The polypeptide is Protein Rex (Homo sapiens (Human)).